A 140-amino-acid chain; its full sequence is Cytochrome B5 isoform D (140 aa).

One can recognise a Cytochrome b5 heme-binding domain in the interval 5-81 (GKVFTLSEVS…LDEYYVGDID (77 aa)). Heme is bound by residues His40 and His64. A helical transmembrane segment spans residues 109–129 (FVIKLLQFLVPLLILGLAFGI).

The protein belongs to the cytochrome b5 family. In terms of assembly, interacts with CER1, BI-1, FAH1 and FAH2. In terms of tissue distribution, expressed in roots, stems, leaves, flowers and siliques.

The protein localises to the endoplasmic reticulum membrane. In terms of biological role, membrane bound hemoprotein which function as an electron carrier for several membrane bound oxygenases, including fatty acid desaturases. The sequence is that of Cytochrome B5 isoform D from Arabidopsis thaliana (Mouse-ear cress).